The chain runs to 118 residues: Ribosome-binding factor A (118 aa).

It belongs to the RbfA family. Monomer. Binds 30S ribosomal subunits, but not 50S ribosomal subunits or 70S ribosomes.

The protein localises to the cytoplasm. One of several proteins that assist in the late maturation steps of the functional core of the 30S ribosomal subunit. Associates with free 30S ribosomal subunits (but not with 30S subunits that are part of 70S ribosomes or polysomes). Required for efficient processing of 16S rRNA. May interact with the 5'-terminal helix region of 16S rRNA. In Bacillus cereus (strain AH187), this protein is Ribosome-binding factor A.